The following is a 126-amino-acid chain: Aspartate 1-decarboxylase (126 aa).

The Schiff-base intermediate with substrate; via pyruvic acid role is filled by Ser-25. Ser-25 is subject to Pyruvic acid (Ser). Position 57 (Thr-57) interacts with substrate. Catalysis depends on Tyr-58, which acts as the Proton donor. A substrate-binding site is contributed by 73-75 (GAA).

Belongs to the PanD family. Heterooctamer of four alpha and four beta subunits. Pyruvate is required as a cofactor. Post-translationally, is synthesized initially as an inactive proenzyme, which is activated by self-cleavage at a specific serine bond to produce a beta-subunit with a hydroxyl group at its C-terminus and an alpha-subunit with a pyruvoyl group at its N-terminus.

Its subcellular location is the cytoplasm. It catalyses the reaction L-aspartate + H(+) = beta-alanine + CO2. It functions in the pathway cofactor biosynthesis; (R)-pantothenate biosynthesis; beta-alanine from L-aspartate: step 1/1. Its function is as follows. Catalyzes the pyruvoyl-dependent decarboxylation of aspartate to produce beta-alanine. The polypeptide is Aspartate 1-decarboxylase (Azotobacter vinelandii (strain DJ / ATCC BAA-1303)).